We begin with the raw amino-acid sequence, 547 residues long: Chaperonin GroEL (547 aa).

Residues 30 to 33, Lys51, 87 to 91, Gly415, 479 to 481, and Asp495 contribute to the ATP site; these read TLGP, DGTTT, and NAA.

This sequence belongs to the chaperonin (HSP60) family. In terms of assembly, forms a cylinder of 14 subunits composed of two heptameric rings stacked back-to-back. Interacts with the co-chaperonin GroES.

It localises to the cytoplasm. The enzyme catalyses ATP + H2O + a folded polypeptide = ADP + phosphate + an unfolded polypeptide.. In terms of biological role, together with its co-chaperonin GroES, plays an essential role in assisting protein folding. The GroEL-GroES system forms a nano-cage that allows encapsulation of the non-native substrate proteins and provides a physical environment optimized to promote and accelerate protein folding. The sequence is that of Chaperonin GroEL from Bordetella bronchiseptica (strain ATCC BAA-588 / NCTC 13252 / RB50) (Alcaligenes bronchisepticus).